Reading from the N-terminus, the 552-residue chain is Protein psiB (552 aa).

The N-terminal stretch at 1–18 is a signal peptide; the sequence is MKLLSVLITFLLATVIYS. N-linked (GlcNAc...) asparagine glycosylation occurs at Asn-60. The region spanning 114–255 is the PA14 domain; the sequence is TYDTTRNIYV…EDYCGVCQGD (142 aa). N-linked (GlcNAc...) asparagine glycans are attached at residues Asn-281, Asn-313, Asn-340, Asn-365, Asn-446, Asn-472, and Asn-521.

Belongs to the prespore-cell-inducing factor family.

The protein resides in the secreted. The protein is Protein psiB (psiB) of Dictyostelium discoideum (Social amoeba).